The primary structure comprises 383 residues: Alanine racemase (383 aa).

Residue Lys50 is the Proton acceptor; specific for D-alanine of the active site. Position 50 is an N6-(pyridoxal phosphate)lysine (Lys50). Arg151 contacts substrate. Tyr279 serves as the catalytic Proton acceptor; specific for L-alanine. Met327 serves as a coordination point for substrate.

The protein belongs to the alanine racemase family. Pyridoxal 5'-phosphate is required as a cofactor.

It catalyses the reaction L-alanine = D-alanine. Its pathway is amino-acid biosynthesis; D-alanine biosynthesis; D-alanine from L-alanine: step 1/1. Catalyzes the interconversion of L-alanine and D-alanine. May also act on other amino acids. The chain is Alanine racemase (alr) from Chlorobaculum tepidum (strain ATCC 49652 / DSM 12025 / NBRC 103806 / TLS) (Chlorobium tepidum).